A 94-amino-acid polypeptide reads, in one-letter code: (2R)-sulfolactate sulfo-lyase subunit alpha (94 aa).

The AFP-like domain occupies 16-90 (VVVVEGVEAG…GEHVHVHNVK (75 aa)).

(2R)-sulfolactate sulfo-lyase is composed of a SuyA and a SuyB subunit.

It is found in the cytoplasm. The enzyme catalyses (2R)-3-sulfolactate = sulfite + pyruvate + H(+). Its function is as follows. Together with SuyB, desulfonates sulfolactate to pyruvate and sulfite. This is (2R)-sulfolactate sulfo-lyase subunit alpha (suyA) from Chromohalobacter salexigens (strain ATCC BAA-138 / DSM 3043 / CIP 106854 / NCIMB 13768 / 1H11).